We begin with the raw amino-acid sequence, 592 residues long: Pectinesterase/pectinesterase inhibitor 3 (592 aa).

The N-terminal stretch at 1–35 is a signal peptide; the sequence is MAPSMKEIFSKDNFKKNKKLVLLSAAVALLFVAAV. A propeptide spans 36 to 238 (removed in mature 42 kDa form); sequence AGISAGASKA…KITSNNRKLK (203 aa). The propeptide at 36–273 is removed in mature 38 kDa form; it reads AGISAGASKA…WLSAGDRRLL (238 aa). The pectinesterase inhibitor 3 stretch occupies residues 53–212; it reads PSSHAVLRSS…EHMCSNALAM (160 aa). N96 and N215 each carry an N-linked (GlcNAc...) asparagine glycan. The pectinesterase 3 stretch occupies residues 281-578; that stretch reads DATVAADGSG…YTAGQFIGGG (298 aa). Substrate is bound by residues T356 and Q386. D409 functions as the Proton donor; for pectinesterase activity in the catalytic mechanism. C423 and C443 form a disulfide bridge. Residue D430 is the Nucleophile; for pectinesterase activity of the active site. The substrate site is built by Q454, R498, and W500.

In the N-terminal section; belongs to the PMEI family. This sequence in the C-terminal section; belongs to the pectinesterase family. In terms of assembly, interacts with BIIDXI and At5g11420. Binds reversibly to PMEI4, PMEI7 and PMEI8 to be inhibited; the stability of the PME3-PMEIs complexes and the inhibition of the pectin methylesterase (PME) activity is pH-dependent, based on protonation status of amino-acids at the complex interface. As to expression, expressed in roots, cotyledons, hypocotyls, seedlings, leaves, stems, flowers, dry seeds and siliques. Accumulates in etiolated hypocotyls (at protein level).

It is found in the secreted. The protein resides in the extracellular space. The protein localises to the apoplast. It localises to the cell wall. The enzyme catalyses [(1-&gt;4)-alpha-D-galacturonosyl methyl ester](n) + n H2O = [(1-&gt;4)-alpha-D-galacturonosyl](n) + n methanol + n H(+). Its pathway is glycan metabolism; pectin degradation; 2-dehydro-3-deoxy-D-gluconate from pectin: step 1/5. With respect to regulation, regulated negatively by pectinesterase inhibitors (e.g. PMEI3, PMEI4, PMEI7 and PMEI9) in a pH-dependent manner, mainly in slightly acidic conditions (pH 6.0 and 5.0), especially in dark-grown hypocotyls; this processus relies on changes in the protonation of amino acids involved in intermolecular and intramolecular interactions. In terms of biological role, acts in the modification of cell walls via demethylesterification of cell wall pectin. Required for zinc Zn(2+) homeostasis and to monitor Zn(2+) influence on cell wall-controlled growth processes such as root cell elongation. Monitors seed germination and favors root hairs production. Prevents cruciferin seed storage proteins activity, but promotes the expression of genes involved in cell wall organization and remodeling as well as genes involved in lipid and protein metabolism, during post-germinative growth of seedlings. Confers sensitivity to Zn(2+) when overexpressed. Acts as a susceptibility factor required for the initial colonization of the host tissue by virulent pathogens including Botrytis cinerea and Pectobacterium carotovorum, probably by facilitating cell wall pectine degradation by pathogen pectic enzymes after its demethylesterification. The protein is Pectinesterase/pectinesterase inhibitor 3 of Arabidopsis thaliana (Mouse-ear cress).